A 169-amino-acid polypeptide reads, in one-letter code: UPF0303 protein Oant_1766 (169 aa).

This sequence belongs to the UPF0303 family.

The chain is UPF0303 protein Oant_1766 from Brucella anthropi (strain ATCC 49188 / DSM 6882 / CCUG 24695 / JCM 21032 / LMG 3331 / NBRC 15819 / NCTC 12168 / Alc 37) (Ochrobactrum anthropi).